A 199-amino-acid chain; its full sequence is dITP/XTP pyrophosphatase (199 aa).

Residue 8 to 13 coordinates substrate; that stretch reads SGNAGK. Residue Asp69 is the Proton acceptor of the active site. Asp69 is a binding site for Mg(2+). Substrate-binding positions include Ser70, 154 to 157, Lys177, and 182 to 183; these read FGYN and HR.

It belongs to the HAM1 NTPase family. As to quaternary structure, homodimer. Mg(2+) serves as cofactor.

The enzyme catalyses XTP + H2O = XMP + diphosphate + H(+). It catalyses the reaction dITP + H2O = dIMP + diphosphate + H(+). The catalysed reaction is ITP + H2O = IMP + diphosphate + H(+). Its function is as follows. Pyrophosphatase that catalyzes the hydrolysis of nucleoside triphosphates to their monophosphate derivatives, with a high preference for the non-canonical purine nucleotides XTP (xanthosine triphosphate), dITP (deoxyinosine triphosphate) and ITP. Seems to function as a house-cleaning enzyme that removes non-canonical purine nucleotides from the nucleotide pool, thus preventing their incorporation into DNA/RNA and avoiding chromosomal lesions. The sequence is that of dITP/XTP pyrophosphatase from Xanthomonas oryzae pv. oryzae (strain KACC10331 / KXO85).